The sequence spans 329 residues: Calcium homeostasis modulator protein (329 aa).

Residues 1-14 are Cytoplasmic-facing; that stretch reads MTTSINSVVTVFQN. Residues 15-35 form a helical membrane-spanning segment; the sequence is VFTNHGSTLLNGILIATTVGG. Residues 36–53 lie on the Extracellular side of the membrane; the sequence is QSLVRKLTFSCPCAYPLN. The chain crosses the membrane as a helical span at residues 54 to 74; the sequence is IYHSLVFMFGPTAALLLIGIT. The Cytoplasmic portion of the chain corresponds to 75-103; that stretch reads VNSTTWKLAHGFFFRVRDTRHSWKTTCVS. The chain crosses the membrane as a helical span at residues 104 to 124; the sequence is WIEVLIQSSVAPIAWLFVVFL. Topologically, residues 125–191 are extracellular; the sequence is DGGYYRCYRS…DASYLEAESQ (67 aa). N148 carries an N-linked (GlcNAc...) asparagine glycan. The helical transmembrane segment at 192 to 212 threads the bilayer; that stretch reads IYAWGLLLFSGVAAFLVITCN. Residues 213–329 lie on the Cytoplasmic side of the membrane; the sequence is RMCDKYTLVQ…QIIVDETKED (117 aa).

It belongs to the CALHM family. In terms of tissue distribution, expressed in head and body wall muscles, IL2, ASG, ASI, ASJ, PHA and PHB sensory neurons, and spermatheca.

It localises to the cell membrane. In terms of biological role, pore-forming subunit of a voltage-gated ion channel. Permeable to monovalent cations, divalent cations and anions with selectivity Ca(2+) &gt; Mg(2+) &gt; Na(+) = K(+) &gt; Cl(-). Acts both as a voltage-gated and calcium-activated ion channel. Required for normal locomotion. This Caenorhabditis elegans protein is Calcium homeostasis modulator protein.